Consider the following 507-residue polypeptide: WD-40 repeat-containing protein MSI4 (507 aa).

Met1 is subject to N-acetylmethionine. The disordered stretch occupies residues 1-66 (MESDEAAAVS…KTQQSPSVDE (66 aa)). 3 WD repeats span residues 95–137 (RWGP…KPRV), 162–202 (IHPG…NRHA), and 217–257 (GHQD…TTIG). Positions 258-272 (TDSKSSGSIIKQTGE) are enriched in polar residues. The interval 258–282 (TDSKSSGSIIKQTGEGTDKNESPTV) is disordered. 4 WD repeats span residues 290–330 (GHED…NPVT), 335–375 (AHDA…ANGV), 384–424 (GHKA…KKSD), and 439–486 (GHRD…YRPE). A DWD box motif is present at residues 308 to 323 (FCSVGDDSCLILWDAR).

It belongs to the WD repeat RBAP46/RBAP48/MSI1 family. As to quaternary structure, interacts with AHL16 and HOS1. Interacts with LHP1, PDP1, PDP2 and PDP3. Component of the PRC2 (polycomb repressive complex 2) complex which regulates histone methylation on histone H3K27. In terms of tissue distribution, expressed in rosette leaves, cauline leaves, main stems and developing fruits. Expressed at higher levels in roots and flowers.

Its subcellular location is the nucleus. In terms of biological role, core histone-binding subunit that may target chromatin assembly factors, chromatin remodeling factors and histone deacetylases to their histone substrates in a manner that is regulated by nucleosomal DNA. Component of the flowering autonomous pathway which positively regulates flowering by promoting transcriptional repression of the flowering repressor FLC. May promote histone deacetylation at the FLC locus leading to the formation of repressive chromatin structures. Forms a histone deacetylase complex with HDA5, HDA6 and FLD that represses FLC gene expression to control flowering time. Also negatively regulates cold-responsive genes. Acts together with PDP1 and MSI5 to regulate the function of the PRC2 complex on FLC. Required for systemic acquired resistance (SAR) toward pathogenic bacteria (e.g. Pseudomonas syringae pv tomato DC3000 (avrPto)). Together with FLD and MSI4/FVE, contributes to dehydroabietinal-dependent (DA, a diterpenoid tricyclic diterpene) activation of flowering ans SAR. The polypeptide is WD-40 repeat-containing protein MSI4 (Arabidopsis thaliana (Mouse-ear cress)).